The sequence spans 189 residues: MKKIGVLGLQGAISEHLDKLSKIPNVEPFSLKYKEEIDTIDGLIIPGGESTAIGRLLSDFNLTEPLKTRVNAGMPVWGTCAGMIILAKTITNDRRRHLEVMDINVMRNGYGRQLNSFTTEVSLAKVSSDKIPLVFIRAPYVVEVAPNVEVLLRVDENIVACRQDNMLATSFHPELTEDLSFHRYFAEMI.

48–50 (GES) contributes to the L-glutamine binding site. The Nucleophile role is filled by Cys-80. L-glutamine-binding positions include Arg-107 and 136–137 (IR). Residues His-172 and Glu-174 each act as charge relay system in the active site.

The protein belongs to the glutaminase PdxT/SNO family. As to quaternary structure, in the presence of PdxS, forms a dodecamer of heterodimers. Only shows activity in the heterodimer.

The enzyme catalyses aldehydo-D-ribose 5-phosphate + D-glyceraldehyde 3-phosphate + L-glutamine = pyridoxal 5'-phosphate + L-glutamate + phosphate + 3 H2O + H(+). The catalysed reaction is L-glutamine + H2O = L-glutamate + NH4(+). Its pathway is cofactor biosynthesis; pyridoxal 5'-phosphate biosynthesis. Functionally, catalyzes the hydrolysis of glutamine to glutamate and ammonia as part of the biosynthesis of pyridoxal 5'-phosphate. The resulting ammonia molecule is channeled to the active site of PdxS. This chain is Pyridoxal 5'-phosphate synthase subunit PdxT, found in Ruminiclostridium cellulolyticum (strain ATCC 35319 / DSM 5812 / JCM 6584 / H10) (Clostridium cellulolyticum).